We begin with the raw amino-acid sequence, 294 residues long: N-acetylmuramic acid 6-phosphate etherase (294 aa).

Residues 54 to 217 enclose the SIS domain; sequence TIHSFKSNGR…STASMIGVGK (164 aa). The Proton donor role is filled by glutamate 82. The active site involves glutamate 113.

It belongs to the GCKR-like family. MurNAc-6-P etherase subfamily. Homodimer.

It carries out the reaction N-acetyl-D-muramate 6-phosphate + H2O = N-acetyl-D-glucosamine 6-phosphate + (R)-lactate. Its pathway is amino-sugar metabolism; N-acetylmuramate degradation. Functionally, specifically catalyzes the cleavage of the D-lactyl ether substituent of MurNAc 6-phosphate, producing GlcNAc 6-phosphate and D-lactate. This is N-acetylmuramic acid 6-phosphate etherase from Oceanobacillus iheyensis (strain DSM 14371 / CIP 107618 / JCM 11309 / KCTC 3954 / HTE831).